Reading from the N-terminus, the 303-residue chain is D-alanine--D-alanine ligase (303 aa).

An ATP-grasp domain is found at 100-295 (KQLLRRHGIL…FPALIARLIE (196 aa)). 127 to 180 (GLGYPLFVKPNTGGSSLCLSRVTQPEGLAPALEAVFAHCGEAIVEPAIPGVEVT) contributes to the ATP binding site. Mg(2+) is bound by residues D249, E262, and N264.

It belongs to the D-alanine--D-alanine ligase family. The cofactor is Mg(2+). Requires Mn(2+) as cofactor.

It localises to the cytoplasm. The catalysed reaction is 2 D-alanine + ATP = D-alanyl-D-alanine + ADP + phosphate + H(+). It functions in the pathway cell wall biogenesis; peptidoglycan biosynthesis. Functionally, cell wall formation. This is D-alanine--D-alanine ligase from Nitratidesulfovibrio vulgaris (strain ATCC 29579 / DSM 644 / CCUG 34227 / NCIMB 8303 / VKM B-1760 / Hildenborough) (Desulfovibrio vulgaris).